Reading from the N-terminus, the 393-residue chain is O-phospho-L-seryl-tRNA:Cys-tRNA synthase 1 (393 aa).

Pyridoxal 5'-phosphate is bound by residues Ala-85 to Arg-86, Asn-190, and Ser-213 to His-215. An N6-(pyridoxal phosphate)lysine modification is found at Lys-216.

This sequence belongs to the SepCysS family. Homodimer. Interacts with SepRS. The cofactor is pyridoxal 5'-phosphate.

The catalysed reaction is O-phospho-L-seryl-tRNA(Cys) + hydrogen sulfide + H(+) = L-cysteinyl-tRNA(Cys) + phosphate. Functionally, converts O-phospho-L-seryl-tRNA(Cys) (Sep-tRNA(Cys)) to L-cysteinyl-tRNA(Cys) (Cys-tRNA(Cys)). This Methanospirillum hungatei JF-1 (strain ATCC 27890 / DSM 864 / NBRC 100397 / JF-1) protein is O-phospho-L-seryl-tRNA:Cys-tRNA synthase 1.